We begin with the raw amino-acid sequence, 299 residues long: UDP-N-acetylenolpyruvoylglucosamine reductase (299 aa).

The region spanning 26-191 (GIGGPAKYFV…VSATFQLNAS (166 aa)) is the FAD-binding PCMH-type domain. Arg-170 is an active-site residue. The Proton donor role is filled by Cys-218. Glu-288 is an active-site residue.

The protein belongs to the MurB family. FAD is required as a cofactor.

The protein resides in the cytoplasm. The enzyme catalyses UDP-N-acetyl-alpha-D-muramate + NADP(+) = UDP-N-acetyl-3-O-(1-carboxyvinyl)-alpha-D-glucosamine + NADPH + H(+). It functions in the pathway cell wall biogenesis; peptidoglycan biosynthesis. Its function is as follows. Cell wall formation. This Protochlamydia amoebophila (strain UWE25) protein is UDP-N-acetylenolpyruvoylglucosamine reductase.